A 139-amino-acid polypeptide reads, in one-letter code: Putative lipoprotein MIP_01412 (139 aa).

A signal peptide spans 1–19 (MRNRTVAAGAVLTAALLGA). C20 carries N-palmitoyl cysteine lipidation. C20 carries S-diacylglycerol cysteine lipidation.

Belongs to the mycobacterial 19 kDa antigen family.

It is found in the cell membrane. The polypeptide is Putative lipoprotein MIP_01412 (Mycobacterium indicus pranii (strain DSM 45239 / MTCC 9506)).